The sequence spans 199 residues: dITP/XTP pyrophosphatase (199 aa).

7 to 12 serves as a coordination point for substrate; the sequence is TGNAGK. The Proton acceptor role is filled by aspartate 68. Aspartate 68 lines the Mg(2+) pocket. Residues serine 69, 153–156, lysine 176, and 181–182 contribute to the substrate site; these read FGYD and HR.

The protein belongs to the HAM1 NTPase family. Homodimer. Mg(2+) serves as cofactor.

The enzyme catalyses XTP + H2O = XMP + diphosphate + H(+). It carries out the reaction dITP + H2O = dIMP + diphosphate + H(+). The catalysed reaction is ITP + H2O = IMP + diphosphate + H(+). Its function is as follows. Pyrophosphatase that catalyzes the hydrolysis of nucleoside triphosphates to their monophosphate derivatives, with a high preference for the non-canonical purine nucleotides XTP (xanthosine triphosphate), dITP (deoxyinosine triphosphate) and ITP. Seems to function as a house-cleaning enzyme that removes non-canonical purine nucleotides from the nucleotide pool, thus preventing their incorporation into DNA/RNA and avoiding chromosomal lesions. This chain is dITP/XTP pyrophosphatase, found in Halorhodospira halophila (strain DSM 244 / SL1) (Ectothiorhodospira halophila (strain DSM 244 / SL1)).